We begin with the raw amino-acid sequence, 185 residues long: ATP-dependent protease subunit HslV (185 aa).

Threonine 12 is a catalytic residue. Alanine 168, cysteine 171, and threonine 174 together coordinate Na(+).

This sequence belongs to the peptidase T1B family. HslV subfamily. As to quaternary structure, a double ring-shaped homohexamer of HslV is capped on each side by a ring-shaped HslU homohexamer. The assembly of the HslU/HslV complex is dependent on binding of ATP.

The protein localises to the cytoplasm. It catalyses the reaction ATP-dependent cleavage of peptide bonds with broad specificity.. With respect to regulation, allosterically activated by HslU binding. Its function is as follows. Protease subunit of a proteasome-like degradation complex believed to be a general protein degrading machinery. This Cereibacter sphaeroides (strain ATCC 17029 / ATH 2.4.9) (Rhodobacter sphaeroides) protein is ATP-dependent protease subunit HslV.